Reading from the N-terminus, the 946-residue chain is Protein translocase subunit SecA (946 aa).

ATP-binding positions include Q87, 105 to 109 (GEGKT), and D524. The tract at residues 905 to 926 (APASDAAQRDPKNPASWGKIGR) is disordered. 4 residues coordinate Zn(2+): C930, C932, C941, and H942.

The protein belongs to the SecA family. As to quaternary structure, monomer and homodimer. Part of the essential Sec protein translocation apparatus which comprises SecA, SecYEG and auxiliary proteins SecDF-YajC and YidC. The cofactor is Zn(2+).

The protein localises to the cell inner membrane. It is found in the cytoplasm. It catalyses the reaction ATP + H2O + cellular proteinSide 1 = ADP + phosphate + cellular proteinSide 2.. Functionally, part of the Sec protein translocase complex. Interacts with the SecYEG preprotein conducting channel. Has a central role in coupling the hydrolysis of ATP to the transfer of proteins into and across the cell membrane, serving both as a receptor for the preprotein-SecB complex and as an ATP-driven molecular motor driving the stepwise translocation of polypeptide chains across the membrane. The sequence is that of Protein translocase subunit SecA from Bradyrhizobium diazoefficiens (strain JCM 10833 / BCRC 13528 / IAM 13628 / NBRC 14792 / USDA 110).